We begin with the raw amino-acid sequence, 260 residues long: Carbonic anhydrase 3 (260 aa).

Ala-2 carries the post-translational modification N-acetylalanine. An Alpha-carbonic anhydrase domain is found at Lys-3–Phe-259. Phosphoserine occurs at positions 29, 43, 50, and 55. Residues Lys-64–Arg-67 form an involved in proton transfer region. Thr-73 bears the Phosphothreonine mark. Zn(2+) contacts are provided by His-94, His-96, and His-119. Tyr-127 bears the Phosphotyrosine mark. Thr-176 carries the post-translational modification Phosphothreonine. S-glutathionyl cysteine is present on residues Cys-182 and Cys-187. Position 198–199 (Thr-198–Thr-199) interacts with substrate. The residue at position 216 (Thr-216) is a Phosphothreonine. Position 219 is a phosphoserine (Ser-219).

The protein belongs to the alpha-carbonic anhydrase family. Zn(2+) serves as cofactor. S-thiolated both by thiol-disulfide exchange with glutathione disulfide and by oxyradical-initiated S-thiolation with reduced glutathione. In terms of processing, S-glutathionylated in hepatocytes under oxidative stress.

It localises to the cytoplasm. The enzyme catalyses hydrogencarbonate + H(+) = CO2 + H2O. Its activity is regulated as follows. Inhibited by acetazolamide. Its function is as follows. Reversible hydration of carbon dioxide. In Sus scrofa (Pig), this protein is Carbonic anhydrase 3.